Consider the following 198-residue polypeptide: Recombination protein RecR (198 aa).

The segment at 57–72 (CSECQTLTDKDPCAVC) adopts a C4-type zinc-finger fold. Residues 80–175 (RIICVVEGVP…KVTRIAQGIP (96 aa)) enclose the Toprim domain.

Belongs to the RecR family.

Its function is as follows. May play a role in DNA repair. It seems to be involved in an RecBC-independent recombinational process of DNA repair. It may act with RecF and RecO. The protein is Recombination protein RecR of Anaeromyxobacter sp. (strain Fw109-5).